A 609-amino-acid polypeptide reads, in one-letter code: Phosphomethylpyrimidine synthase (609 aa).

Substrate contacts are provided by residues Asn219, Met248, Tyr277, His313, 333-335, 374-377, and Glu413; these read SRG and DGLR. Residue His417 coordinates Zn(2+). Residue Tyr440 participates in substrate binding. His481 serves as a coordination point for Zn(2+). Positions 561, 564, and 569 each coordinate [4Fe-4S] cluster.

This sequence belongs to the ThiC family. The cofactor is [4Fe-4S] cluster.

The enzyme catalyses 5-amino-1-(5-phospho-beta-D-ribosyl)imidazole + S-adenosyl-L-methionine = 4-amino-2-methyl-5-(phosphooxymethyl)pyrimidine + CO + 5'-deoxyadenosine + formate + L-methionine + 3 H(+). Its pathway is cofactor biosynthesis; thiamine diphosphate biosynthesis. Its function is as follows. Catalyzes the synthesis of the hydroxymethylpyrimidine phosphate (HMP-P) moiety of thiamine from aminoimidazole ribotide (AIR) in a radical S-adenosyl-L-methionine (SAM)-dependent reaction. The protein is Phosphomethylpyrimidine synthase of Deinococcus geothermalis (strain DSM 11300 / CIP 105573 / AG-3a).